The chain runs to 126 residues: 3-aminobutyryl-CoA ammonia lyase (126 aa).

The protein belongs to the KAL family. Homohexamer.

It catalyses the reaction (3S)-3-aminobutanoyl-CoA = (2E)-butenoyl-CoA + NH4(+). The protein operates within amino-acid degradation; L-lysine degradation via acetate pathway. Its function is as follows. Involved in the anaerobic fermentation of lysine. Catalyzes the deamination of L-3-aminobutyryl-CoA to produce crotonoyl-CoA. The protein is 3-aminobutyryl-CoA ammonia lyase of Acetoanaerobium sticklandii (strain ATCC 12662 / DSM 519 / JCM 1433 / CCUG 9281 / NCIMB 10654 / HF) (Clostridium sticklandii).